The sequence spans 143 residues: uncharacterized protein (143 aa).

A mitochondrion-targeting transit peptide spans 1–38; that stretch reads MKYWKYLSQLTIRRPLTYNNALLYRNRFPSILTWKRSA.

Its subcellular location is the mitochondrion. This is an uncharacterized protein from Schizosaccharomyces pombe (strain 972 / ATCC 24843) (Fission yeast).